A 386-amino-acid polypeptide reads, in one-letter code: Meiotic chromosome segregation protein C1539.02 (386 aa).

Disordered regions lie at residues 1-28 (MNQD…SNKS), 46-85 (RALI…SSKQ), and 366-386 (DIHE…KTKG). Residues 15–28 (AETSQLKNFSSNKS) are compositionally biased toward polar residues.

The protein localises to the nucleus. Required for meiotic chromosome segregation. In Schizosaccharomyces pombe (strain 972 / ATCC 24843) (Fission yeast), this protein is Meiotic chromosome segregation protein C1539.02.